Consider the following 331-residue polypeptide: Retinol dehydrogenase 13 (331 aa).

Position 2 is an N-acetylserine (Ser2). An NADP(+)-binding site is contributed by 45–51; the sequence is GANTGIG. Residue Ser174 participates in substrate binding. Tyr200 (proton acceptor) is an active-site residue. Ser323 is modified (phosphoserine).

The protein belongs to the short-chain dehydrogenases/reductases (SDR) family. Widely expressed. In the retina, detected in the inner segment of the photoreceptor cells. Weak signals are observed in a small population of inner nuclear neurons and the inner plexiform layer.

Its subcellular location is the mitochondrion inner membrane. It catalyses the reaction all-trans-retinol + NADP(+) = all-trans-retinal + NADPH + H(+). The protein operates within cofactor metabolism; retinol metabolism. Retinol dehydrogenase with a clear preference for NADP. Oxidizes all-trans-retinol, but seems to reduce all-trans-retinal with much higher efficiency. Has no activity toward steroids. This chain is Retinol dehydrogenase 13 (RDH13), found in Homo sapiens (Human).